Reading from the N-terminus, the 241-residue chain is Methylthioribulose-1-phosphate dehydratase (241 aa).

Cys96 is a substrate binding site. The Zn(2+) site is built by His114 and His116. The active-site Proton donor/acceptor is Glu138. His194 serves as a coordination point for Zn(2+).

Belongs to the aldolase class II family. MtnB subfamily. In terms of assembly, homotetramer. Interacts with APAF1. May interact with CASP1. Requires Zn(2+) as cofactor. In terms of tissue distribution, expressed in skeletal muscle (at protein level).

It localises to the cytoplasm. The enzyme catalyses 5-(methylsulfanyl)-D-ribulose 1-phosphate = 5-methylsulfanyl-2,3-dioxopentyl phosphate + H2O. The protein operates within amino-acid biosynthesis; L-methionine biosynthesis via salvage pathway; L-methionine from S-methyl-5-thio-alpha-D-ribose 1-phosphate: step 2/6. Its function is as follows. Catalyzes the dehydration of methylthioribulose-1-phosphate (MTRu-1-P) into 2,3-diketo-5-methylthiopentyl-1-phosphate (DK-MTP-1-P). Functions in the methionine salvage pathway, which plays a key role in cancer, apoptosis, microbial proliferation and inflammation. May inhibit the CASP1-related inflammatory response (pyroptosis), the CASP9-dependent apoptotic pathway and the cytochrome c-dependent and APAF1-mediated cell death. This chain is Methylthioribulose-1-phosphate dehydratase, found in Mus musculus (Mouse).